Consider the following 1019-residue polypeptide: MRYRLAWLLHPALPSTFRSVLGARLPPPERLCGFQKKTYSKMNNPAIKRIGNHITKSPEDKREYRGLELANGIKVLLISDPTTDKSSAALDVHIGSLSDPPNIAGLSHFCEHMLFLGTKKYPKENEYSQFLSEHAGSSNAFTSGEHTNYYFDVSHEHLEGALDRFAQFFLCPLFDESCKDREVNAVDSEHEKNVMNDAWRLFQLEKATGNPKHPFSKFGTGNKYTLETRPNQEGIDVRQELLKFHSAYYSSNLMAVCVLGRESLDDLTNLVVKLFSEVENKNVPLPEFPEHPFQEEHLKQLYKIVPIKDIRNLYVTFPIPDLQKYYKSNPGHYLGHLIGHEGPGSLLSELKSKGWVNTLVGGQKEGARGFMFFIINVDLTEEGLLHVEDIILHMFQYIQKLRAEGPQEWVFQECKDLNAVAFRFKDKERPRGYTSKIAGILHYYPLEEVLTAEYLLEEFRPDLIEMVLDKLRPENVRVAIVSKSFEGKTDRTEEWYGTQYKQEAIPDEVIKKWQNADLNGKFKLPTKNEFIPTNFEILPLEKEATPYPALIKDTAMSKLWFKQDDKFFLPKACLNFEFFSPFAYVDPLHCNMAYLYLELLKDSLNEYAYAAELAGLSYDLQNTIYGMYLSVKGYNDKQPILLKKIIEKMATFEIDEKRFEIIKEAYMRSLNNFRAEQPHQHAMYYLRLLMTEVAWTKDELKEALDDVTLPRLKAFIPQLLSRLHIEALLHGNITKQAALGIMQMVEDTLIEHAHTKPLLPSQLVRYREVQLPDRGWFVYQQRNEVHNNCGIEIYYQTDMQSTSENMFLELFCQIISEPCFNTLRTKEQLGYIVFSGPRRANGIQGLRFIIQSEKPPHYLESRVEAFLITMEKSIEDMTEEAFQKHIQALAIRRLDKPKKLSAECAKYWGEIISQQYNFDRDNTEVAYLKTLTKEDIIKFYKEMLAVDAPRRHKVSVHVLAREMDSCPVVGEFPCQNDINLSQAPALPQPEVIQNMTEFKRGLPLFPLVKPHINFMAAKL.

H108 is a binding site for Zn(2+). The Proton acceptor role is filled by E111. Zn(2+)-binding residues include H112 and E189. K192 carries the post-translational modification N6-succinyllysine. Residues 336–342 (HLIGHEG) and 359–363 (LVGGQ) contribute to the substrate site. R429 contributes to the ATP binding site. K697 carries the N6-succinyllysine modification. Positions 853–858 (EKPPHY) match the SlyX motif motif. 895–901 (DKPKKLS) provides a ligand contact to ATP.

It belongs to the peptidase M16 family. In terms of assembly, homodimer. Can also form homotetramers. (Microbial infection) Interacts (via N-terminus) with varicella-zoster virus (VZV) envelope glycoprotein E (via N-terminus); the membrane-associated isoform may function as an entry receptor for this virus. Requires Zn(2+) as cofactor. In terms of processing, the N-terminus is blocked. As to expression, detected in brain and in cerebrospinal fluid (at protein level).

It is found in the cytoplasm. The protein localises to the cytosol. Its subcellular location is the cell membrane. It localises to the secreted. It carries out the reaction Degradation of insulin, glucagon and other polypeptides. No action on proteins.. Its activity is regulated as follows. Activated by small peptides. Activated by ATP and GTP, and to a lesser extent by CTP, TTP and PPPi. Inhibited by bacitracin. In vitro modification of Cys residues impairs enzyme activity. Its function is as follows. Plays a role in the cellular breakdown of insulin, APP peptides, IAPP peptides, natriuretic peptides, glucagon, bradykinin, kallidin, and other peptides, and thereby plays a role in intercellular peptide signaling. Substrate binding induces important conformation changes, making it possible to bind and degrade larger substrates, such as insulin. Contributes to the regulation of peptide hormone signaling cascades and regulation of blood glucose homeostasis via its role in the degradation of insulin, glucagon and IAPP. Plays a role in the degradation and clearance of APP-derived amyloidogenic peptides that are secreted by neurons and microglia. Degrades the natriuretic peptides ANP, BNP and CNP, inactivating their ability to raise intracellular cGMP. Also degrades an aberrant frameshifted 40-residue form of NPPA (fsNPPA) which is associated with familial atrial fibrillation in heterozygous patients. Involved in antigen processing. Produces both the N terminus and the C terminus of MAGEA3-derived antigenic peptide (EVDPIGHLY) that is presented to cytotoxic T lymphocytes by MHC class I. (Microbial infection) The membrane-associated isoform acts as an entry receptor for varicella-zoster virus (VZV). The chain is Insulin-degrading enzyme from Homo sapiens (Human).